Here is a 196-residue protein sequence, read N- to C-terminus: Ribosome-binding factor A (196 aa).

Belongs to the RbfA family. In terms of assembly, monomer. Binds 30S ribosomal subunits, but not 50S ribosomal subunits or 70S ribosomes.

Its subcellular location is the cytoplasm. Its function is as follows. One of several proteins that assist in the late maturation steps of the functional core of the 30S ribosomal subunit. Associates with free 30S ribosomal subunits (but not with 30S subunits that are part of 70S ribosomes or polysomes). Required for efficient processing of 16S rRNA. May interact with the 5'-terminal helix region of 16S rRNA. The sequence is that of Ribosome-binding factor A from Tropheryma whipplei (strain TW08/27) (Whipple's bacillus).